Consider the following 551-residue polypeptide: Solute carrier family 22 member 3 (551 aa).

Residues 21–41 (VFLLLCLTGVTFAFLFVGVVF) traverse the membrane as a helical segment. 3 N-linked (GlcNAc...) asparagine glycosylation sites follow: Asn-72, Asn-99, and Asn-114. A helical transmembrane segment spans residues 177–197 (LIIYLISCFGVGITGVVVAFA). Asn-199 is a glycosylation site (N-linked (GlcNAc...) asparagine). Helical transmembrane passes span 236 to 256 (IVGI…PGIA) and 264 to 284 (GIQL…WVVP). A Proline-rich sequence motif is present at residues 284–288 (PESPR). Asn-317 carries N-linked (GlcNAc...) asparagine glycosylation. The next 3 membrane-spanning stretches (helical) occupy residues 376–396 (IDFF…LLTI), 464–484 (GVSL…FLLF), and 493–513 (LPLI…MLLP).

Belongs to the major facilitator (TC 2.A.1) superfamily. Organic cation transporter (TC 2.A.1.19) family. As to expression, highly expressed in placenta. Highly expressed in kidney cortex. In kidney, expressed specifically in the proximal and distal convoluted tubules and within Bowman capsule. Expressed in brain, particularly in dopaminergic neurons of the substantia nigra compacta, non-aminergic neurons of the ventral tegmental area, substantia nigra reticulata, locus coeruleus, hippocampus and cortex. In brain, also detected in astrocytes in the substantia nigra reticulata, several hypothalamic nuclei and nigrostriatal region. Expressed in neurons and glial cells of amygdala.

It is found in the cell membrane. The protein resides in the apical cell membrane. The protein localises to the basolateral cell membrane. Its subcellular location is the mitochondrion membrane. It localises to the endomembrane system. It is found in the nucleus membrane. The protein resides in the nucleus outer membrane. It carries out the reaction (R)-noradrenaline(out) = (R)-noradrenaline(in). The catalysed reaction is (R)-adrenaline(out) = (R)-adrenaline(in). The enzyme catalyses serotonin(out) = serotonin(in). It catalyses the reaction dopamine(out) = dopamine(in). It carries out the reaction histamine(out) = histamine(in). The catalysed reaction is tyramine(in) = tyramine(out). The enzyme catalyses guanidine(out) = guanidine(in). It catalyses the reaction agmatine(out) = agmatine(in). It carries out the reaction spermidine(in) = spermidine(out). The catalysed reaction is L-histidyl-L-proline diketopiperazine(in) = L-histidyl-L-proline diketopiperazine(out). The enzyme catalyses (R)-salsolinol(in) = (R)-salsolinol(out). In terms of biological role, electrogenic voltage-dependent transporter that mediates the transport of a variety of organic cations such as endogenous bioactive amines, cationic drugs and xenobiotics. Cation cellular uptake or release is driven by the electrochemical potential, i.e. membrane potential and concentration gradient. Functions as a Na(+)- and Cl(-)-independent, bidirectional uniporter. Implicated in monoamine neurotransmitters uptake such as dopamine, adrenaline/epinephrine, noradrenaline/norepinephrine, homovanillic acid, histamine, serotonin and tyramine, thereby supporting a role in homeostatic regulation of aminergic neurotransmission in the brain. Transports dopaminergic neuromodulators cyclo(his-pro) and salsolinol with low efficiency. May be involved in the uptake and disposition of cationic compounds by renal clearance from the blood flow. May contribute to regulate the transport of cationic compounds in testis across the blood-testis-barrier. Mediates the transport of polyamine spermidine and putrescine. Mediates the bidirectional transport of polyamine agmatine. Also transports guanidine. May also mediate intracellular transport of organic cations, thereby playing a role in amine metabolism and intracellular signaling. This chain is Solute carrier family 22 member 3, found in Mus musculus (Mouse).